Consider the following 363-residue polypeptide: Flagellar P-ring protein (363 aa).

The first 20 residues, 1–20 (MKCKLIFAVFMLAFSMPSQA), serve as a signal peptide directing secretion.

It belongs to the FlgI family. As to quaternary structure, the basal body constitutes a major portion of the flagellar organelle and consists of four rings (L,P,S, and M) mounted on a central rod.

Its subcellular location is the periplasm. The protein localises to the bacterial flagellum basal body. Assembles around the rod to form the L-ring and probably protects the motor/basal body from shearing forces during rotation. The chain is Flagellar P-ring protein from Shewanella oneidensis (strain ATCC 700550 / JCM 31522 / CIP 106686 / LMG 19005 / NCIMB 14063 / MR-1).